Consider the following 691-residue polypeptide: Elongation factor G (691 aa).

One can recognise a tr-type G domain in the interval 8 to 282 (ERVRNIGIAA…AVVDYLPAPV (275 aa)). Residues 17–24 (AHIDAGKT), 81–85 (DTPGH), and 135–138 (NKMD) each bind GTP.

It belongs to the TRAFAC class translation factor GTPase superfamily. Classic translation factor GTPase family. EF-G/EF-2 subfamily.

The protein resides in the cytoplasm. Functionally, catalyzes the GTP-dependent ribosomal translocation step during translation elongation. During this step, the ribosome changes from the pre-translocational (PRE) to the post-translocational (POST) state as the newly formed A-site-bound peptidyl-tRNA and P-site-bound deacylated tRNA move to the P and E sites, respectively. Catalyzes the coordinated movement of the two tRNA molecules, the mRNA and conformational changes in the ribosome. This is Elongation factor G from Prochlorococcus marinus (strain MIT 9313).